The following is a 205-amino-acid chain: Large ribosomal subunit protein uL4 (205 aa).

Residues 54 to 78 form a disordered region; it reads GDISGTTAKPHRQKHTGRARQGSLR. Positions 62 to 71 are enriched in basic residues; it reads KPHRQKHTGR.

Belongs to the universal ribosomal protein uL4 family. As to quaternary structure, part of the 50S ribosomal subunit.

One of the primary rRNA binding proteins, this protein initially binds near the 5'-end of the 23S rRNA. It is important during the early stages of 50S assembly. It makes multiple contacts with different domains of the 23S rRNA in the assembled 50S subunit and ribosome. Functionally, forms part of the polypeptide exit tunnel. The protein is Large ribosomal subunit protein uL4 of Ehrlichia chaffeensis (strain ATCC CRL-10679 / Arkansas).